We begin with the raw amino-acid sequence, 96 residues long: Aspartyl/glutamyl-tRNA(Asn/Gln) amidotransferase subunit C (96 aa).

The segment at 64–96 (REDEPEPGLPREEVLKNAPDQQDGQFRVPAILE) is disordered.

Belongs to the GatC family. As to quaternary structure, heterotrimer of A, B and C subunits.

It catalyses the reaction L-glutamyl-tRNA(Gln) + L-glutamine + ATP + H2O = L-glutaminyl-tRNA(Gln) + L-glutamate + ADP + phosphate + H(+). It carries out the reaction L-aspartyl-tRNA(Asn) + L-glutamine + ATP + H2O = L-asparaginyl-tRNA(Asn) + L-glutamate + ADP + phosphate + 2 H(+). Functionally, allows the formation of correctly charged Asn-tRNA(Asn) or Gln-tRNA(Gln) through the transamidation of misacylated Asp-tRNA(Asn) or Glu-tRNA(Gln) in organisms which lack either or both of asparaginyl-tRNA or glutaminyl-tRNA synthetases. The reaction takes place in the presence of glutamine and ATP through an activated phospho-Asp-tRNA(Asn) or phospho-Glu-tRNA(Gln). This chain is Aspartyl/glutamyl-tRNA(Asn/Gln) amidotransferase subunit C, found in Geobacillus thermodenitrificans (strain NG80-2).